The following is a 220-amino-acid chain: Orotidine 5'-phosphate decarboxylase (220 aa).

Substrate is bound by residues Asp-12, Lys-34, 60-69 (DFKVADIPNT), Ser-117, 170-180 (PGVGAQGGKAS), Gly-193, and Arg-194. The active-site Proton donor is the Lys-62.

This sequence belongs to the OMP decarboxylase family. Type 1 subfamily. Homodimer.

It catalyses the reaction orotidine 5'-phosphate + H(+) = UMP + CO2. The protein operates within pyrimidine metabolism; UMP biosynthesis via de novo pathway; UMP from orotate: step 2/2. In terms of biological role, catalyzes the decarboxylation of orotidine 5'-monophosphate (OMP) to uridine 5'-monophosphate (UMP). The protein is Orotidine 5'-phosphate decarboxylase of Methanosarcina mazei (strain ATCC BAA-159 / DSM 3647 / Goe1 / Go1 / JCM 11833 / OCM 88) (Methanosarcina frisia).